Reading from the N-terminus, the 188-residue chain is Shikimate kinase (188 aa).

Residue Gly-21–Thr-26 participates in ATP binding. Residue Thr-25 participates in Mg(2+) binding. Asp-43, Arg-67, and Gly-90 together coordinate substrate. An ATP-binding site is contributed by Arg-130. Substrate is bound at residue Arg-148.

Belongs to the shikimate kinase family. Monomer. Mg(2+) is required as a cofactor.

The protein localises to the cytoplasm. The catalysed reaction is shikimate + ATP = 3-phosphoshikimate + ADP + H(+). It participates in metabolic intermediate biosynthesis; chorismate biosynthesis; chorismate from D-erythrose 4-phosphate and phosphoenolpyruvate: step 5/7. Its function is as follows. Catalyzes the specific phosphorylation of the 3-hydroxyl group of shikimic acid using ATP as a cosubstrate. This chain is Shikimate kinase, found in Geobacillus thermodenitrificans (strain NG80-2).